We begin with the raw amino-acid sequence, 856 residues long: V-type proton ATPase subunit a (856 aa).

Topologically, residues 1–409 (MAPKQDTPFR…NAYGTATYQE (409 aa)) are cytoplasmic. The chain crosses the membrane as a helical span at residues 410 to 428 (VNPAIPVIVTFPFLFAVMF). The Vacuolar portion of the chain corresponds to 429–430 (GD). The helical transmembrane segment at 431 to 447 (FGHALIMLCAALAMIYW) threads the bilayer. Topologically, residues 448 to 460 (EKPLKKVTFELFA) are cytoplasmic. Residues 461–490 (MVFYGRYIVLVMAVFSVYTGLIYNDVFSKS) traverse the membrane as a helical segment. Over 491 to 544 (MTLFDSQWKWVVPENFKEGMTVKAVLREPNGYRYPFGLDWRWHGTENELLFINS) the chain is Vacuolar. Residues 545 to 564 (YKMKMAIILGWAHMTYSLCF) traverse the membrane as a helical segment. The Cytoplasmic portion of the chain corresponds to 565–582 (SYINARHFKRPIDIWGNF). The chain crosses the membrane as a helical span at residues 583-603 (VPGMIFFQSIFGYLVLCIIYK). Topologically, residues 604 to 648 (WSVDWFGTGRQPPGLLNMLIYMFLQPGTLDGGVELYPGQATVQVI) are vacuolar. A helical membrane pass occupies residues 649 to 668 (LLLLAVIQVPILLFLKPFYL). Topologically, residues 669-738 (RWENNRARAK…EVMIHQVIHT (70 aa)) are cytoplasmic. Residues 689–710 (VSALDEDDEEDPSNGDDYEGAA) are disordered. The span at 692 to 707 (LDEDDEEDPSNGDDYE) shows a compositional bias: acidic residues. A helical membrane pass occupies residues 739 to 763 (IEFCLNSVSHTASYLRLWALSLAHQ). The Vacuolar portion of the chain corresponds to 764–784 (QLSAVLWSMTMAKALESKGLG). Residues 785-823 (GAIFLVVAFAMFFVLSVIILIIMEGVSAMLHSLRLAWVE) form a helical membrane-spanning segment. Residues 824–856 (SFSKFAEFGGWPFTPFSFKQQLEESEELKEYIG) are Cytoplasmic-facing.

It belongs to the V-ATPase 116 kDa subunit family. As to quaternary structure, V-ATPase is a heteromultimeric enzyme composed of a peripheral catalytic V1 complex (components A to H) attached to an integral membrane V0 proton pore complex (components: a, c, c', c'', d, e, f and VOA1).

It localises to the vacuole membrane. Subunit of the V0 complex of vacuolar(H+)-ATPase (V-ATPase), a multisubunit enzyme composed of a peripheral complex (V1) that hydrolyzes ATP and a membrane integral complex (V0) that translocates protons. V-ATPase is responsible for acidifying and maintaining the pH of intracellular compartments. The sequence is that of V-type proton ATPase subunit a (vph-1) from Neurospora crassa (strain ATCC 24698 / 74-OR23-1A / CBS 708.71 / DSM 1257 / FGSC 987).